An 89-amino-acid polypeptide reads, in one-letter code: Small ribosomal subunit protein uS14 (89 aa).

It belongs to the universal ribosomal protein uS14 family. As to quaternary structure, part of the 30S ribosomal subunit. Contacts proteins S3 and S10.

Binds 16S rRNA, required for the assembly of 30S particles and may also be responsible for determining the conformation of the 16S rRNA at the A site. The polypeptide is Small ribosomal subunit protein uS14 (Chlorobium limicola (strain DSM 245 / NBRC 103803 / 6330)).